A 289-amino-acid chain; its full sequence is RNA-binding protein CP29B, chloroplastic (289 aa).

Residues 1 to 62 (MAASASSLAL…NSPASRFARN (62 aa)) constitute a chloroplast transit peptide. S6 and S12 each carry phosphoserine. The residue at position 63 (V63) is an N-acetylvaline. An RRM 1 domain is found at 91 to 169 (LKLFVGNLPF…RPLRVNAGPP (79 aa)). The tract at residues 158–199 (DGRPLRVNAGPPPPKREDGFSRGPRSSFGSSGSGYGGGGGSG) is disordered. The tract at residues 170 to 203 (PPKREDGFSRGPRSSFGSSGSGYGGGGGSGAGSG) is linker (Gly-rich). The segment covering 178–187 (SRGPRSSFGS) has biased composition (low complexity). Residues 188–199 (SGSGYGGGGGSG) are compositionally biased toward gly residues. Positions 204–282 (NRVYVGNLSW…RQIRVSEAEA (79 aa)) constitute an RRM 2 domain.

Post-translationally, ADP-ribosylated by the Pseudomonas syringae type III effector HopU1. ADP-ribosylation reduces the ability of the protein to bind RNA. In terms of processing, phosphorylated on tyrosine residues after treatment with abscisic acid (ABA). Phosphorylation may reduce the ability of the protein to bind RNA.

The protein resides in the plastid. It is found in the chloroplast. In terms of biological role, could be involved in splicing and/or processing of chloroplast RNA's. The protein is RNA-binding protein CP29B, chloroplastic of Arabidopsis thaliana (Mouse-ear cress).